The sequence spans 388 residues: Mannitol-1-phosphate 5-dehydrogenase (388 aa).

4-15 (AVHFGAGNIGRG) contacts NAD(+).

Belongs to the mannitol dehydrogenase family.

It carries out the reaction D-mannitol 1-phosphate + NAD(+) = beta-D-fructose 6-phosphate + NADH + H(+). The sequence is that of Mannitol-1-phosphate 5-dehydrogenase from Lactococcus lactis subsp. cremoris (strain SK11).